The chain runs to 403 residues: Acetate kinase (403 aa).

Residue Asn7 coordinates Mg(2+). An ATP-binding site is contributed by Lys14. Arg90 provides a ligand contact to substrate. Catalysis depends on Asp147, which acts as the Proton donor/acceptor. Residues 207-211 (HIGNG), 283-285 (DMR), and 331-335 (GVGEN) each bind ATP. Glu386 serves as a coordination point for Mg(2+).

The protein belongs to the acetokinase family. Homodimer. Requires Mg(2+) as cofactor. Mn(2+) is required as a cofactor.

Its subcellular location is the cytoplasm. The enzyme catalyses acetate + ATP = acetyl phosphate + ADP. It functions in the pathway metabolic intermediate biosynthesis; acetyl-CoA biosynthesis; acetyl-CoA from acetate: step 1/2. In terms of biological role, catalyzes the formation of acetyl phosphate from acetate and ATP. Can also catalyze the reverse reaction. Phosphorylates propionate (54%) in addition to acetate (100%). Uses GTP (100%), ITP (163%), UTP (56%), and CTP (21%) as phosphoryl donors in addition to ATP (100%). The sequence is that of Acetate kinase from Thermotoga maritima (strain ATCC 43589 / DSM 3109 / JCM 10099 / NBRC 100826 / MSB8).